We begin with the raw amino-acid sequence, 417 residues long: MCSIVEDDFGDEGGAHAMKEDTPQPELGGNELCRKCNTEQAVLKLNQKEPQCRVCFLNYVRHKFRASLGSTKIVRRGSRVLIILTGEPANVTLLDMVRFGLEQDAFKQLRIVPVLLYVDDDFVGNTSEARLQQLAERLQVFKQFESFPAYYTVCGSSRHVALTFDGAFSPAGFEQDEARLLQVLDAVRSVSSKQDLLEQVRKQTYRQIGHALQCAYVFLSDIGVDLAKTLLSNVALGRGCSLAQDVAFCDDRYNTVKLVRPIRDLNPDEVSNYLQYSEQPLLSYSPAKHFEDKPSLQNLTAKFIDNLMQSFPSTVSTVYRTGDKLDAPKAARNECCRFCGAALDYRGSKTLFATEYSRLVSSRINAACSHEDILLKSKQMELDAERAVNGEDDQGEERVLMKQLCHGCRNIFEDLNK.

A compositionally biased stretch (acidic residues) spans 1-11 (MCSIVEDDFGD). The segment at 1–24 (MCSIVEDDFGDEGGAHAMKEDTPQ) is disordered. Residues 13–22 (GGAHAMKEDT) show a composition bias toward basic and acidic residues.

Belongs to the CTU2/NCS2 family.

It localises to the cytoplasm. It functions in the pathway tRNA modification; 5-methoxycarbonylmethyl-2-thiouridine-tRNA biosynthesis. In terms of biological role, plays a central role in 2-thiolation of mcm(5)S(2)U at tRNA wobble positions of tRNA(Lys), tRNA(Glu) and tRNA(Gln). May act by forming a heterodimer with NCS6/CTU1 that ligates sulfur from thiocarboxylated URM1 onto the uridine of tRNAs at wobble position. In Anopheles gambiae (African malaria mosquito), this protein is Cytoplasmic tRNA 2-thiolation protein 2.